The sequence spans 224 residues: uncharacterized protein (224 aa).

This is an uncharacterized protein from Acidianus hospitalis (AFV-1).